A 442-amino-acid chain; its full sequence is tRNA modification GTPase MnmE (442 aa).

(6S)-5-formyl-5,6,7,8-tetrahydrofolate is bound by residues Arg27, Glu84, and Lys124. The 146-residue stretch at 221-366 (GLHVVIVGAP…LLDALQAFAE (146 aa)) folds into the TrmE-type G domain. GTP-binding positions include 231-236 (NAGKSS), 250-256 (SEEAGTT), and 275-278 (DTAG). Positions 235 and 256 each coordinate Mg(2+). A (6S)-5-formyl-5,6,7,8-tetrahydrofolate-binding site is contributed by Lys442.

It belongs to the TRAFAC class TrmE-Era-EngA-EngB-Septin-like GTPase superfamily. TrmE GTPase family. In terms of assembly, homodimer. Heterotetramer of two MnmE and two MnmG subunits. Requires K(+) as cofactor.

It localises to the cytoplasm. Exhibits a very high intrinsic GTPase hydrolysis rate. Involved in the addition of a carboxymethylaminomethyl (cmnm) group at the wobble position (U34) of certain tRNAs, forming tRNA-cmnm(5)s(2)U34. The chain is tRNA modification GTPase MnmE from Brucella abortus (strain 2308).